A 217-amino-acid polypeptide reads, in one-letter code: Peptide methionine sulfoxide reductase MsrA (217 aa).

The tract at residues 16 to 39 is disordered; it reads EALKGGRHPVLESPQPHTVLGTPI. The active site involves cysteine 56.

The protein belongs to the MsrA Met sulfoxide reductase family.

It carries out the reaction L-methionyl-[protein] + [thioredoxin]-disulfide + H2O = L-methionyl-(S)-S-oxide-[protein] + [thioredoxin]-dithiol. It catalyses the reaction [thioredoxin]-disulfide + L-methionine + H2O = L-methionine (S)-S-oxide + [thioredoxin]-dithiol. Its function is as follows. Has an important function as a repair enzyme for proteins that have been inactivated by oxidation. Catalyzes the reversible oxidation-reduction of methionine sulfoxide in proteins to methionine. This chain is Peptide methionine sulfoxide reductase MsrA, found in Corynebacterium efficiens (strain DSM 44549 / YS-314 / AJ 12310 / JCM 11189 / NBRC 100395).